The chain runs to 283 residues: Pyridoxal kinase PdxY (283 aa).

Residue Ser8 participates in substrate binding. ATP is bound by residues Asp110 and Glu147. Asp219 contacts substrate.

Belongs to the pyridoxine kinase family. PdxY subfamily. As to quaternary structure, homodimer. Requires Mg(2+) as cofactor.

It carries out the reaction pyridoxal + ATP = pyridoxal 5'-phosphate + ADP + H(+). The protein operates within cofactor metabolism; pyridoxal 5'-phosphate salvage; pyridoxal 5'-phosphate from pyridoxal: step 1/1. Pyridoxal kinase involved in the salvage pathway of pyridoxal 5'-phosphate (PLP). Catalyzes the phosphorylation of pyridoxal to PLP. This is Pyridoxal kinase PdxY from Leifsonia xyli subsp. xyli (strain CTCB07).